We begin with the raw amino-acid sequence, 306 residues long: Ribosomal protein L11 methyltransferase (306 aa).

S-adenosyl-L-methionine is bound by residues threonine 154, glycine 179, aspartate 201, and asparagine 242.

Belongs to the methyltransferase superfamily. PrmA family.

The protein resides in the cytoplasm. The catalysed reaction is L-lysyl-[protein] + 3 S-adenosyl-L-methionine = N(6),N(6),N(6)-trimethyl-L-lysyl-[protein] + 3 S-adenosyl-L-homocysteine + 3 H(+). Functionally, methylates ribosomal protein L11. The protein is Ribosomal protein L11 methyltransferase of Stenotrophomonas maltophilia (strain R551-3).